Reading from the N-terminus, the 536-residue chain is MLNRVEQELALLGITNVKEIVYNPSYEQLFEEEMKPELEGFEKGRLTTSGAVAVDTGIFTGRSPKDKFIVLDENTKDTVWWTSDEVKNDNKPMSQSTWQSIKELVTNQLSNKRLFVIDAFCGANKDSRVAVRIVTEVAWQAHFVKNMFIRPSEAELANFTPDFVVMNGSKVTNPNWKEQGLNSENFVAFNITEKIQLIGGTWYGGEMKKGLFSLMNYWLPLKGIASMHCSANVGEDGDVAVFFGLSGTGKTTLSTDPKRKLIGDDEHGWDDDGVFNYEGGCYAKTINLSEENEPDIYRAIKRDALLENVVVREDGSIDFADGSKTENTRVSYPIYHIDNIVEPVSKAGHATKVIFLTADAFGVLPPVSKLTPEQTKYYFLSGFTAKLAGTERGVTEPTPTFSACFGKAFLSLHPTQYAEVLVKRMEASGAEAYLVNTGWNGTGKRISIKDTRGIIDAILDGSIEKAEMGSLPIFNLAIPKALPGVDPAILDPRDTYADKAQWQAKAEDLAGRFVKNFEQYATNDEGKALIAAGPKL.

Substrate is bound by residues Arg62, Tyr203, and Lys209. ATP is bound by residues Lys209, His228, and Gly244–Thr252. Lys209 and His228 together coordinate Mn(2+). Residue Asp265 coordinates Mn(2+). ATP is bound by residues Glu293, Arg329, Arg445–Ile446, and Thr451. Arg329 contacts substrate.

This sequence belongs to the phosphoenolpyruvate carboxykinase (ATP) family. Monomer. The cofactor is Mn(2+).

Its subcellular location is the cytoplasm. It catalyses the reaction oxaloacetate + ATP = phosphoenolpyruvate + ADP + CO2. It functions in the pathway carbohydrate biosynthesis; gluconeogenesis. In terms of biological role, involved in the gluconeogenesis. Catalyzes the conversion of oxaloacetate (OAA) to phosphoenolpyruvate (PEP) through direct phosphoryl transfer between the nucleoside triphosphate and OAA. The polypeptide is Phosphoenolpyruvate carboxykinase (ATP) (Glaesserella parasuis serovar 5 (strain SH0165) (Haemophilus parasuis)).